A 496-amino-acid chain; its full sequence is Beta-amylase (496 aa).

The substrate site is built by Asp-54, His-94, and Asp-102. Glu-187 acts as the Proton donor in catalysis. Positions 296, 301, and 343 each coordinate substrate. Residue Glu-381 is the Proton acceptor of the active site. Residues 382–383 (NA) and Arg-421 each bind substrate.

It belongs to the glycosyl hydrolase 14 family.

The catalysed reaction is Hydrolysis of (1-&gt;4)-alpha-D-glucosidic linkages in polysaccharides so as to remove successive maltose units from the non-reducing ends of the chains.. The sequence is that of Beta-amylase (BMY1) from Vigna unguiculata (Cowpea).